Reading from the N-terminus, the 335-residue chain is Anthranilate phosphoribosyltransferase (335 aa).

Residues glycine 79, 82-83 (GD), threonine 87, 89-92 (NIST), 107-115 (KHGNRSASS), and alanine 119 each bind 5-phospho-alpha-D-ribose 1-diphosphate. Glycine 79 contacts anthranilate. Mg(2+) is bound at residue serine 91. Residue asparagine 110 participates in anthranilate binding. Position 165 (arginine 165) interacts with anthranilate. Aspartate 224 and glutamate 225 together coordinate Mg(2+).

It belongs to the anthranilate phosphoribosyltransferase family. Homodimer. It depends on Mg(2+) as a cofactor.

The enzyme catalyses N-(5-phospho-beta-D-ribosyl)anthranilate + diphosphate = 5-phospho-alpha-D-ribose 1-diphosphate + anthranilate. Its pathway is amino-acid biosynthesis; L-tryptophan biosynthesis; L-tryptophan from chorismate: step 2/5. In terms of biological role, catalyzes the transfer of the phosphoribosyl group of 5-phosphorylribose-1-pyrophosphate (PRPP) to anthranilate to yield N-(5'-phosphoribosyl)-anthranilate (PRA). This is Anthranilate phosphoribosyltransferase from Methanobrevibacter smithii (strain ATCC 35061 / DSM 861 / OCM 144 / PS).